The following is a 194-amino-acid chain: uncharacterized protein (194 aa).

It belongs to the mimivirus R457/R459 family.

It is found in the virion. This is an uncharacterized protein from Acanthamoeba polyphaga mimivirus (APMV).